Here is a 355-residue protein sequence, read N- to C-terminus: Putative beta-lactamase HcpE (355 aa).

A signal peptide spans 1–22 (MNIKILKILVGGLFFLSLNAHL). TPR repeat units lie at residues 27–60 (DNSF…GVSE), 63–96 (TQLG…DDRE), 98–131 (CFGL…LKHP), 132–166 (ESCY…DMAK), 202–240 (GQAC…NNSG), 245–275 (LGSM…MGSA), 276–311 (VSCS…MGDE), and 312–344 (VGCF…GMKQ). 9 disulfides stabilise this stretch: Cys54–Cys62, Cys90–Cys98, Cys126–Cys134, Cys160–Cys168, Cys197–Cys205, Cys234–Cys242, Cys270–Cys278, Cys306–Cys314, and Cys338–Cys346.

The protein belongs to the hcp beta-lactamase family.

It localises to the secreted. The enzyme catalyses a beta-lactam + H2O = a substituted beta-amino acid. In terms of biological role, may hydrolyze 6-aminopenicillinic acid and 7-aminocephalosporanic acid (ACA) derivatives. The sequence is that of Putative beta-lactamase HcpE (hcpE) from Helicobacter pylori (strain J99 / ATCC 700824) (Campylobacter pylori J99).